The sequence spans 125 residues: Large ribosomal subunit protein bL12 (125 aa).

The protein belongs to the bacterial ribosomal protein bL12 family. In terms of assembly, homodimer. Part of the ribosomal stalk of the 50S ribosomal subunit. Forms a multimeric L10(L12)X complex, where L10 forms an elongated spine to which 2 to 4 L12 dimers bind in a sequential fashion. Binds GTP-bound translation factors.

Forms part of the ribosomal stalk which helps the ribosome interact with GTP-bound translation factors. Is thus essential for accurate translation. The polypeptide is Large ribosomal subunit protein bL12 (Paraburkholderia phymatum (strain DSM 17167 / CIP 108236 / LMG 21445 / STM815) (Burkholderia phymatum)).